The chain runs to 549 residues: Leucine-rich repeat, immunoglobulin-like domain and transmembrane domain-containing protein 2 (549 aa).

An N-terminal signal peptide occupies residues 1-22 (MAFVFYCFLQVLVSWVIHAVQP). Residues 23–54 (FCLPECTCSEESFGRSLQCMSMSLGKIPDNFP) enclose the LRRNT domain. 4 LRR repeats span residues 80-103 (SLEY…EDLP), 104-125 (ELRE…AFRA), 128-149 (LLRV…ALQF), and 152-173 (NLIY…VFLN). N-linked (GlcNAc...) asparagine glycosylation occurs at asparagine 90. In terms of domain architecture, LRRCT spans 200–252 (NPWLCDCRLRGLAQFVKSVGPPFILVNSYLVCQGPVSKAGQLLHETELGVCMK). An Ig-like domain is found at 253–339 (PTISTPSVNV…FNSIGRSSLV (87 aa)). Asparagine 261 carries N-linked (GlcNAc...) asparagine glycosylation. Cysteine 274 and cysteine 327 form a disulfide bridge. Residues 361–447 (EVSAYVDLRV…QPPSQGQCVV (87 aa)) enclose the Fibronectin type-III domain. Residues 463 to 483 (LLHVTVVLCAVLLALPVGAYV) form a helical membrane-spanning segment. Residue asparagine 491 is glycosylated (N-linked (GlcNAc...) asparagine). The segment at 521–549 (FKDPSGVYEDGESHRVMEEDEEVEKEGIS) is disordered. The segment covering 538 to 549 (EEDEEVEKEGIS) has biased composition (acidic residues).

In terms of assembly, interacts with LRIT1; may form a heterodimer with LRIT1.

The protein resides in the membrane. In Mus musculus (Mouse), this protein is Leucine-rich repeat, immunoglobulin-like domain and transmembrane domain-containing protein 2 (Lrit2).